The primary structure comprises 234 residues: Transcriptional activator protein TraR (234 aa).

One can recognise an HTH luxR-type domain in the interval 167-232 (TAEDAAWLDP…HLTALAIRRK (66 aa)). Residues 191–210 (MEEIADVEGVKYNSVRVKLR) constitute a DNA-binding region (H-T-H motif).

The protein belongs to the autoinducer-regulated transcriptional regulatory protein family.

Its function is as follows. Positive regulation of conjugal transfer of Ti plasmids. TraR activates target genes in the presence of AAI and also activates traR and traI themselves. This is Transcriptional activator protein TraR (traR) from Rhizobium radiobacter (Agrobacterium tumefaciens).